Reading from the N-terminus, the 144-residue chain is Deoxyuridine 5'-triphosphate nucleotidohydrolase (144 aa).

Substrate contacts are provided by residues 63–65, asparagine 76, and 80–82; these read RSG and TID.

The protein belongs to the dUTPase family. Mg(2+) serves as cofactor.

It catalyses the reaction dUTP + H2O = dUMP + diphosphate + H(+). Its pathway is pyrimidine metabolism; dUMP biosynthesis; dUMP from dCTP (dUTP route): step 2/2. Its function is as follows. This enzyme is involved in nucleotide metabolism: it produces dUMP, the immediate precursor of thymidine nucleotides and it decreases the intracellular concentration of dUTP so that uracil cannot be incorporated into DNA. The protein is Deoxyuridine 5'-triphosphate nucleotidohydrolase of Phocaeicola vulgatus (strain ATCC 8482 / DSM 1447 / JCM 5826 / CCUG 4940 / NBRC 14291 / NCTC 11154) (Bacteroides vulgatus).